The chain runs to 574 residues: Pescadillo homolog (574 aa).

The interval 289-312 is disordered; that stretch reads PSEPNDDTEVDEFPADPENAGLEE. The segment covering 292-303 has biased composition (acidic residues); sequence PNDDTEVDEFPA. The BRCT domain occupies 323–416; that stretch reads KHKSLFVGLK…LLLPVEDYFP (94 aa). The segment at 452-486 is disordered; it reads LGLDEEDDDDDDDDEEEDDDDDEEEEDKKLRQLEN. A compositionally biased stretch (acidic residues) spans 453 to 477; the sequence is GLDEEDDDDDDDDEEEDDDDDEEEE.

This sequence belongs to the pescadillo family. Component of the PeBoW complex, composed of bop1, pes1 and wdr12. The complex is held together by bop1, which interacts with pes1 via its N-terminal domain and with wdr12 via a high-affinity interaction between the seven-bladed beta-propeller domains of the 2 proteins. The PeBoW complex associates with the 66S pre-ribosome.

It localises to the nucleus. The protein resides in the nucleolus. The protein localises to the nucleoplasm. Its function is as follows. Component of the PeBoW complex, which is required for maturation of 28S and 5.8S ribosomal RNAs and formation of the 60S ribosome. Required for neural crest migration and eye development. The chain is Pescadillo homolog (pes1) from Xenopus laevis (African clawed frog).